Here is a 311-residue protein sequence, read N- to C-terminus: uncharacterized protein (311 aa).

Helical transmembrane passes span 6 to 26 (IFIL…KMLA), 33 to 53 (PFQV…PMAV), 70 to 90 (YLAL…QFAV), 97 to 117 (TAAV…YFIL), 123 to 143 (GITI…FNPA), 155 to 175 (LIGI…TVIS), 185 to 205 (YVFN…LLVV), 219 to 239 (ILVL…CYLG), 244 to 264 (TSAV…TVLA), and 265 to 285 (ILIL…FIII). EamA domains follow at residues 12-141 (AIFY…IIFN) and 166-292 (VVWS…INYS).

This sequence belongs to the EamA transporter family.

Its subcellular location is the cell membrane. This is an uncharacterized protein from Clostridium kluyveri (strain ATCC 8527 / DSM 555 / NBRC 12016 / NCIMB 10680 / K1).